The following is a 549-amino-acid chain: Lipase 1 (549 aa).

Residues Met-1–Ala-15 form the signal peptide. Cys-75 and Cys-112 form a disulfide bridge. Catalysis depends on Ser-224, which acts as the Acyl-ester intermediate. The cysteines at positions 283 and 292 are disulfide-linked. A glycan (N-linked (GlcNAc...) asparagine) is linked at Asn-329. The active-site Charge relay system is Glu-356. Asn-366 carries an N-linked (GlcNAc...) asparagine glycan. Catalysis depends on His-464, which acts as the Charge relay system.

The protein belongs to the type-B carboxylesterase/lipase family.

The catalysed reaction is a triacylglycerol + H2O = a diacylglycerol + a fatty acid + H(+). The protein is Lipase 1 (LIP1) of Diutina rugosa (Yeast).